The chain runs to 526 residues: Bifunctional purine biosynthesis protein PurH (526 aa).

Positions 1-147 constitute an MGS-like domain; that stretch reads MTKIERALIS…KNWAHVAIVT (147 aa).

It belongs to the PurH family.

It carries out the reaction (6R)-10-formyltetrahydrofolate + 5-amino-1-(5-phospho-beta-D-ribosyl)imidazole-4-carboxamide = 5-formamido-1-(5-phospho-D-ribosyl)imidazole-4-carboxamide + (6S)-5,6,7,8-tetrahydrofolate. The catalysed reaction is IMP + H2O = 5-formamido-1-(5-phospho-D-ribosyl)imidazole-4-carboxamide. It participates in purine metabolism; IMP biosynthesis via de novo pathway; 5-formamido-1-(5-phospho-D-ribosyl)imidazole-4-carboxamide from 5-amino-1-(5-phospho-D-ribosyl)imidazole-4-carboxamide (10-formyl THF route): step 1/1. The protein operates within purine metabolism; IMP biosynthesis via de novo pathway; IMP from 5-formamido-1-(5-phospho-D-ribosyl)imidazole-4-carboxamide: step 1/1. The polypeptide is Bifunctional purine biosynthesis protein PurH (Laribacter hongkongensis (strain HLHK9)).